An 834-amino-acid chain; its full sequence is Kinesin-like protein KIF18B (834 aa).

The region spanning 9 to 353 is the Kinesin motor domain; sequence VVRVVVRVRP…LKYADRAKEI (345 aa). Position 111–118 (111–118) interacts with ATP; that stretch reads GATGAGKT. Residues 368–404 are a coiled coil; that stretch reads ISQYATICQQLQAEVAFLREKLQMYEAGAQALQQQCS. 4 disordered regions span residues 400-508, 602-642, 655-686, and 800-834; these read QQQC…ADHS, LGAP…NLEM, RGSL…RVCP, and KKPN…TESY. Residues 411–432 are compositionally biased toward low complexity; that stretch reads SIPQSLSSSSLQPGPSSQSSTL. Phosphothreonine is present on Thr-431. The span at 462–474 shows a compositional bias: polar residues; it reads EQEQCPQDKQCPT. The residue at position 484 (Ser-484) is a Phosphoserine. Basic and acidic residues predominate over residues 611–620; it reads TSDKTFQKPT. Residues 619–627 carry the Nuclear localization signal motif; the sequence is PTKEKKRKL. 2 positions are modified to phosphoserine: Ser-634 and Ser-657. Thr-669 carries the post-translational modification Phosphothreonine. Ser-814 bears the Phosphoserine mark.

It belongs to the TRAFAC class myosin-kinesin ATPase superfamily. Kinesin family. As to quaternary structure, interacts with MAPRE1; this interaction is required for efficient accumulation at microtubule plus ends. Interacts with KIF2C at microtubule tips; this interaction increases the affinity of both partners for microtubule plus ends and is required for robust microtubule depolymerization. KIF2C phosphorylation by AURKA or AURKB strongly reduces KIF18B-binding.

It localises to the nucleus. The protein resides in the cytoplasm. The protein localises to the cytoskeleton. Its function is as follows. In complex with KIF2C, constitutes the major microtubule plus-end depolymerizing activity in mitotic cells. Its major role may be to transport KIF2C and/or MAPRE1 along microtubules. In Mus musculus (Mouse), this protein is Kinesin-like protein KIF18B (Kif18b).